A 337-amino-acid chain; its full sequence is Ornithine carbamoyltransferase (337 aa).

Carbamoyl phosphate is bound by residues 57 to 60, Gln84, Arg108, and 135 to 138; these read STRT and HPTQ. L-ornithine contacts are provided by residues Asn167, Asp231, and 235–236; that span reads SM. Carbamoyl phosphate-binding positions include 272–273 and Arg317; that span reads CL.

The protein belongs to the aspartate/ornithine carbamoyltransferase superfamily. OTCase family.

The protein resides in the cytoplasm. The catalysed reaction is carbamoyl phosphate + L-ornithine = L-citrulline + phosphate + H(+). It participates in amino-acid degradation; L-arginine degradation via ADI pathway; carbamoyl phosphate from L-arginine: step 2/2. In terms of biological role, reversibly catalyzes the transfer of the carbamoyl group from carbamoyl phosphate (CP) to the N(epsilon) atom of ornithine (ORN) to produce L-citrulline. This is Ornithine carbamoyltransferase from Streptococcus equi subsp. zooepidemicus (strain MGCS10565).